The following is a 380-amino-acid chain: MEEIYAKFVSQKISKTRWRPLPPGSLQTAETFATGSWDNEENYISLWSIGDFGNLDSDGGFEGDHQLLCDIRHHGDVMDLQFFDQERIVAASSTGCVTVFLHHPNNQTLSVNQQWTTAHYHTGPGSPSYSSAPCTGVVCNNPEIVTVGEDGRINLFRADHKEAVRTIDNADSSTLHAVTFLRTPEILTVNSIGQLKIWDFRQQGNEPSQILSLTGDRVPLHCVDRHPNQQHVVATGGQDGMLSIWDVRQGTMPVSLLKAHEAEMWEVHFHPSNPEHLFTCSEDGSLWHWDASTDVPEKSSLFHQGGRSSTFLSHSISNQANVHQSVISSWLSTDPAKDRIEITSLLPSRSLSVNTLDVLGPCLVCGTDAEAIYVTRHLFS.

Met-1 carries the N-acetylmethionine modification. WD repeat units lie at residues 8–57, 72–110, 127–166, 170–208, 215–255, and 259–299; these read FVSQ…NLDS, RHHG…QTLS, PSYS…AVRT, ADSS…NEPS, GDRV…MPVS, and AHEA…PEKS.

As to quaternary structure, component of the Nup107-160 subcomplex of the nuclear pore complex (NPC). The Nup107-160 subcomplex includes NUP160, NUP133, NUP107, NUP98, NUP85, NUP43, NUP37, SEH1 and SEC13.

The protein localises to the chromosome. It localises to the centromere. The protein resides in the kinetochore. It is found in the nucleus. Its subcellular location is the nuclear pore complex. Functionally, component of the Nup107-160 subcomplex of the nuclear pore complex (NPC). The Nup107-160 subcomplex is required for the assembly of a functional NPC. The Nup107-160 subcomplex is also required for normal kinetochore microtubule attachment, mitotic progression and chromosome segregation. This Homo sapiens (Human) protein is Nucleoporin Nup43 (NUP43).